A 238-amino-acid chain; its full sequence is Probable septum site-determining protein MinC (238 aa).

The protein belongs to the MinC family. Interacts with MinD and FtsZ.

Cell division inhibitor that blocks the formation of polar Z ring septums. Rapidly oscillates between the poles of the cell to destabilize FtsZ filaments that have formed before they mature into polar Z rings. Prevents FtsZ polymerization. This Aeromonas salmonicida (strain A449) protein is Probable septum site-determining protein MinC.